Reading from the N-terminus, the 460-residue chain is Photosystem II CP43 reaction center protein (460 aa).

Met-1 is a propeptide. 5 helical membrane-spanning segments follow: residues 56–80 (LFETSHFIPEKPLYEQGMILLPHLA), 121–142 (IVGPDVLEDSFSFFGYDWRDKN), 165–187 (KALFIGGIYDTWAPGGGDIRFIT), 242–262 (RPFSWARRAFVWSGEAYLSYS), and 278–299 (WYNNTVYPSEFYGPTAAEASQA). Glu-354 provides a ligand contact to [CaMn4O5] cluster. The helical transmembrane segment at 434–458 (RARAAAAGFEKGINRENEPVLSMRP) threads the bilayer.

It belongs to the PsbB/PsbC family. PsbC subfamily. In terms of assembly, PSII is composed of 1 copy each of membrane proteins PsbA, PsbB, PsbC, PsbD, PsbE, PsbF, PsbH, PsbI, PsbJ, PsbK, PsbL, PsbM, PsbT, PsbY, PsbZ, Psb30/Ycf12, at least 3 peripheral proteins of the oxygen-evolving complex and a large number of cofactors. It forms dimeric complexes. It depends on Binds multiple chlorophylls and provides some of the ligands for the Ca-4Mn-5O cluster of the oxygen-evolving complex. It may also provide a ligand for a Cl- that is required for oxygen evolution. PSII binds additional chlorophylls, carotenoids and specific lipids. as a cofactor.

Its subcellular location is the plastid. The protein resides in the chloroplast thylakoid membrane. In terms of biological role, one of the components of the core complex of photosystem II (PSII). It binds chlorophyll and helps catalyze the primary light-induced photochemical processes of PSII. PSII is a light-driven water:plastoquinone oxidoreductase, using light energy to abstract electrons from H(2)O, generating O(2) and a proton gradient subsequently used for ATP formation. This is Photosystem II CP43 reaction center protein from Cyanidium caldarium (Red alga).